The primary structure comprises 417 residues: Peptidyl-Asp metalloendopeptidase (417 aa).

An N-terminal signal peptide occupies residues 1–25 (MLSRSIGKAAGGLVLGLSVAAAAHA). His327 is a binding site for Zn(2+). Glu328 is a catalytic residue. The Zn(2+) site is built by His331 and His337.

This sequence belongs to the peptidase M72 family. Zn(2+) serves as cofactor.

The catalysed reaction is Cleavage of Xaa-|-Asp, Xaa-|-Glu and Xaa-|-cysteic acid bonds.. Functionally, metalloprotease, specifically cleaves on the N-terminal side of aspartyl, glutamyl and cysteic acid residues. This is Peptidyl-Asp metalloendopeptidase from Stenotrophomonas maltophilia (strain R551-3).